We begin with the raw amino-acid sequence, 141 residues long: uncharacterized protein (141 aa).

This is an uncharacterized protein from Acheta domesticus (House cricket).